A 287-amino-acid polypeptide reads, in one-letter code: Formamidopyrimidine-DNA glycosylase (287 aa).

The active-site Schiff-base intermediate with DNA is the Pro-2. The active-site Proton donor is the Glu-3. Lys-60 serves as the catalytic Proton donor; for beta-elimination activity. His-100 and Arg-119 together coordinate DNA. The FPG-type zinc-finger motif lies at 249–283; the sequence is QVYGREGEPCRHCGTVIAKIKLGGRSAHFCPQCQP. Arg-273 (proton donor; for delta-elimination activity) is an active-site residue.

The protein belongs to the FPG family. As to quaternary structure, monomer. Requires Zn(2+) as cofactor.

It carries out the reaction Hydrolysis of DNA containing ring-opened 7-methylguanine residues, releasing 2,6-diamino-4-hydroxy-5-(N-methyl)formamidopyrimidine.. The enzyme catalyses 2'-deoxyribonucleotide-(2'-deoxyribose 5'-phosphate)-2'-deoxyribonucleotide-DNA = a 3'-end 2'-deoxyribonucleotide-(2,3-dehydro-2,3-deoxyribose 5'-phosphate)-DNA + a 5'-end 5'-phospho-2'-deoxyribonucleoside-DNA + H(+). In terms of biological role, involved in base excision repair of DNA damaged by oxidation or by mutagenic agents. Acts as a DNA glycosylase that recognizes and removes damaged bases. Has a preference for oxidized purines, such as 7,8-dihydro-8-oxoguanine (8-oxoG). Has AP (apurinic/apyrimidinic) lyase activity and introduces nicks in the DNA strand. Cleaves the DNA backbone by beta-delta elimination to generate a single-strand break at the site of the removed base with both 3'- and 5'-phosphates. This Synechocystis sp. (strain ATCC 27184 / PCC 6803 / Kazusa) protein is Formamidopyrimidine-DNA glycosylase (mutM).